Consider the following 478-residue polypeptide: MTLSFITRWRDELPETYTALSPTPLNNARLIWHNTELANTLSIPSSLFKNSAGVWGGENLLPGMSPLAQVYSGHQFGVWAGQLGDGRGILLGEQLLADGTTMDWHLKGAGLTPYSRMGDGRAVLRSTIRESLASEAMHYLGIPTTRALSIVTSDSPVYRETVESGAMLMRVAPSHLRFGHFEHFYYRREPEKVRQLADFAIRHYWSHLDDEEDKYRLWFTDVVARTASLIAQWQTVGFAHGVMNTDNMSLLGLTLDYGPFGFLDDYEPGFICNHSDHQGRYSFDNQPAVALWNLQRLAQTLSPFVAVDALNEALDSYQQVLLTHYGQRMRQKLGFMTEQKEDNALLNELFSLMARERSDYTRTFRMLSLTEQHSAASPLRDEFIDRAAFDDWFARYRGRLQQDEITDSERQQLMQSVNPALVLRNWLAQRAIEAAEKGDMTELHRLHEALRNPFSDRDDDYVSRPPDWGKRLEVSCSS.

The ATP site is built by glycine 84, glycine 86, arginine 87, lysine 107, aspartate 119, glycine 120, arginine 170, and arginine 177. Aspartate 246 (proton acceptor) is an active-site residue. Mg(2+)-binding residues include asparagine 247 and aspartate 256. An ATP-binding site is contributed by aspartate 256.

This sequence belongs to the SELO family. The cofactor is Mg(2+). Mn(2+) is required as a cofactor.

The catalysed reaction is L-seryl-[protein] + ATP = 3-O-(5'-adenylyl)-L-seryl-[protein] + diphosphate. It carries out the reaction L-threonyl-[protein] + ATP = 3-O-(5'-adenylyl)-L-threonyl-[protein] + diphosphate. The enzyme catalyses L-tyrosyl-[protein] + ATP = O-(5'-adenylyl)-L-tyrosyl-[protein] + diphosphate. It catalyses the reaction L-histidyl-[protein] + UTP = N(tele)-(5'-uridylyl)-L-histidyl-[protein] + diphosphate. The catalysed reaction is L-seryl-[protein] + UTP = O-(5'-uridylyl)-L-seryl-[protein] + diphosphate. It carries out the reaction L-tyrosyl-[protein] + UTP = O-(5'-uridylyl)-L-tyrosyl-[protein] + diphosphate. Nucleotidyltransferase involved in the post-translational modification of proteins. It can catalyze the addition of adenosine monophosphate (AMP) or uridine monophosphate (UMP) to a protein, resulting in modifications known as AMPylation and UMPylation. This Escherichia coli O6:K15:H31 (strain 536 / UPEC) protein is Protein nucleotidyltransferase YdiU.